Consider the following 777-residue polypeptide: Intraflagellar transport protein 80 homolog (777 aa).

WD repeat units follow at residues 12 to 50 (KHQE…TSLI), 104 to 143 (AHCG…RSTL), 145 to 185 (QQGT…LQWK), 186 to 225 (AHDG…LYGS), 227 to 265 (PHEH…YALE), 267 to 306 (PNTG…WEWK), and 504 to 542 (KLGT…YVDR).

Component of the IFT complex B, at least composed of IFT20, IFT22, IFT25, IFT27, IFT46, IFT52, TRAF3IP1/IFT54, IFT57, IFT74, IFT80, IFT81, and IFT88. Interacts with IFT88. Interacts with IFT57 and IFT70B.

It is found in the cytoplasm. The protein resides in the cytoskeleton. Its subcellular location is the cilium basal body. It localises to the cilium axoneme. In terms of biological role, component of the intraflagellar transport (IFT) complex B, which is essential for the development and maintenance of motile and sensory cilia. This chain is Intraflagellar transport protein 80 homolog (Ift80), found in Mus musculus (Mouse).